The following is an 82-amino-acid chain: Small ribosomal subunit protein uS17 (82 aa).

This sequence belongs to the universal ribosomal protein uS17 family. As to quaternary structure, part of the 30S ribosomal subunit.

Functionally, one of the primary rRNA binding proteins, it binds specifically to the 5'-end of 16S ribosomal RNA. The sequence is that of Small ribosomal subunit protein uS17 from Nitrobacter hamburgensis (strain DSM 10229 / NCIMB 13809 / X14).